A 236-amino-acid chain; its full sequence is 2,3,4,5-tetrahydropyridine-2,6-dicarboxylate N-acetyltransferase (236 aa).

The protein belongs to the transferase hexapeptide repeat family. DapH subfamily.

It carries out the reaction (S)-2,3,4,5-tetrahydrodipicolinate + acetyl-CoA + H2O = L-2-acetamido-6-oxoheptanedioate + CoA. Its pathway is amino-acid biosynthesis; L-lysine biosynthesis via DAP pathway; LL-2,6-diaminopimelate from (S)-tetrahydrodipicolinate (acetylase route): step 1/3. Functionally, catalyzes the transfer of an acetyl group from acetyl-CoA to tetrahydrodipicolinate. In Lactiplantibacillus plantarum (strain ATCC BAA-793 / NCIMB 8826 / WCFS1) (Lactobacillus plantarum), this protein is 2,3,4,5-tetrahydropyridine-2,6-dicarboxylate N-acetyltransferase.